Here is a 335-residue protein sequence, read N- to C-terminus: DNA polymerase beta (335 aa).

A Glycyl lysine isopeptide (Lys-Gly) (interchain with G-Cter in ubiquitin) cross-link involves residue lysine 41. Lysine 60 is a binding site for K(+). Lysine 60 provides a ligand contact to Na(+). Lysine 61 is covalently cross-linked (Glycyl lysine isopeptide (Lys-Gly) (interchain with G-Cter in ubiquitin)). K(+) is bound by residues leucine 62 and valine 65. Na(+)-binding residues include leucine 62 and valine 65. Lysine 72 serves as the catalytic Nucleophile; Schiff-base intermediate with DNA; for 5'-dRP lyase activity. Residue lysine 72 is modified to N6-acetyllysine. Residue lysine 81 forms a Glycyl lysine isopeptide (Lys-Gly) (interchain with G-Cter in ubiquitin) linkage. The residue at position 83 (arginine 83) is an Omega-N-methylarginine; by PRMT6. K(+)-binding residues include threonine 101, valine 103, and isoleucine 106. The Na(+) site is built by threonine 101, valine 103, and isoleucine 106. Arginine 149 is a dATP binding site. Arginine 149 provides a ligand contact to dCTP. DGTP is bound at residue arginine 149. Position 149 (arginine 149) interacts with dTTP. An Omega-N-methylarginine; by PRMT6 modification is found at arginine 152. Residues serine 180, arginine 183, glycine 189, and aspartate 190 each coordinate dATP. DCTP is bound by residues serine 180, arginine 183, glycine 189, and aspartate 190. Residues serine 180, arginine 183, glycine 189, aspartate 190, and aspartate 192 each coordinate dGTP. Residues serine 180, arginine 183, glycine 189, and aspartate 190 each contribute to the dTTP site. The tract at residues 183 to 192 (RGAESSGDMD) is DNA-binding. Mg(2+) contacts are provided by aspartate 190, aspartate 192, and aspartate 256.

This sequence belongs to the DNA polymerase type-X family. Monomer. Binds single-stranded DNA (ssDNA). Interacts with APEX1, LIG1, LIG3, FEN1, PCNA and XRCC1. Interacts with HUWE1/ARF-BP1, STUB1/CHIP and USP47. Interacts with FAM168A. Mg(2+) is required as a cofactor. Methylation by PRMT6 stimulates the polymerase activity by enhancing DNA binding and processivity. In terms of processing, ubiquitinated at Lys-41, Lys-61 and Lys-81: monoubiquitinated by HUWE1/ARF-BP1. Monoubiquitinated protein is then the target of STUB1/CHIP, which catalyzes polyubiquitination from monoubiquitin, leading to degradation by the proteasome. USP47 mediates the deubiquitination of monoubiquitinated protein, preventing polyubiquitination by STUB1/CHIP and its subsequent degradation.

The protein localises to the nucleus. It is found in the cytoplasm. It carries out the reaction DNA(n) + a 2'-deoxyribonucleoside 5'-triphosphate = DNA(n+1) + diphosphate. The enzyme catalyses a 5'-end 2'-deoxyribose-2'-deoxyribonucleotide-DNA = (2E,4S)-4-hydroxypenten-2-al-5-phosphate + a 5'-end 5'-phospho-2'-deoxyribonucleoside-DNA + H(+). The catalysed reaction is 2'-deoxyribonucleotide-(2'-deoxyribose 5'-phosphate)-2'-deoxyribonucleotide-DNA = a 3'-end 2'-deoxyribonucleotide-(2,3-dehydro-2,3-deoxyribose 5'-phosphate)-DNA + a 5'-end 5'-phospho-2'-deoxyribonucleoside-DNA + H(+). Functionally, repair polymerase that plays a key role in base-excision repair. During this process, the damaged base is excised by specific DNA glycosylases, the DNA backbone is nicked at the abasic site by an apurinic/apyrimidic (AP) endonuclease, and POLB removes 5'-deoxyribose-phosphate from the preincised AP site acting as a 5'-deoxyribose-phosphate lyase (5'-dRP lyase); through its DNA polymerase activity, it adds one nucleotide to the 3' end of the arising single-nucleotide gap. Conducts 'gap-filling' DNA synthesis in a stepwise distributive fashion rather than in a processive fashion as for other DNA polymerases. It is also able to cleave sugar-phosphate bonds 3' to an intact AP site, acting as an AP lyase. The polypeptide is DNA polymerase beta (POLB) (Homo sapiens (Human)).